A 1047-amino-acid polypeptide reads, in one-letter code: Jouberin (1047 aa).

Composition is skewed to basic and acidic residues over residues M1–R17 and L77–E86. Disordered stretches follow at residues M1–A44 and E67–H185. The interaction with HAP1 stretch occupies residues M1–L285. Basic residues predominate over residues K87–V96. Positions G116–G132 are enriched in basic and acidic residues. A compositionally biased stretch (basic residues) spans P150 to K160. Residues G173–H185 show a composition bias toward basic and acidic residues. WD repeat units follow at residues A458–E500, G503–F542, P546–I586, V593–Q632, F649–F688, A692–M731, and P736–E777. Residue S854 is modified to Phosphoserine. Residues D903–L963 enclose the SH3 domain. Basic and acidic residues-rich tracts occupy residues Y964–D1003 and G1012–V1040. Positions Y964–E1047 are disordered. A Phosphoserine modification is found at S975.

Self-associates. Part of the tectonic-like complex (also named B9 complex). Interacts with MKS1. Interacts with NPHP1; probably as heterodimers and/or AHI1(2):NPHP1(2) heterotetramers. Interacts (via SH3 domain) with the dynamin GTPase DNM2. Interacts with HAP1; probably as AHI1(2):HAP1(2) heterotetramers. Interacts with RAB8A. Interacts with CEND1. Interacts with SPATA7.

Its subcellular location is the cytoplasm. It is found in the cytoskeleton. The protein resides in the cilium basal body. It localises to the microtubule organizing center. The protein localises to the centrosome. Its subcellular location is the centriole. It is found in the cell junction. The protein resides in the adherens junction. Involved in vesicle trafficking and required for ciliogenesis, formation of primary non-motile cilium, and recruitment of RAB8A to the basal body of primary cilium. Component of the tectonic-like complex, a complex localized at the transition zone of primary cilia and acting as a barrier that prevents diffusion of transmembrane proteins between the cilia and plasma membranes. Involved in neuronal differentiation. As a positive modulator of classical Wnt signaling, may play a crucial role in ciliary signaling during cerebellum embryonic development. In Rattus norvegicus (Rat), this protein is Jouberin (Ahi1).